Consider the following 549-residue polypeptide: MQPQRNLLLIGLLLVSFMLWQSWMVDKAPKTATPATAESSVPASSGGDVPNQNDASNAKHALLTLRSDVLELTVDTLGGDIVEAKLLKQTEAQGSDKPFVLLEKKPQRQYIAQSGLIGRDGVDNQAERPVYTANGTEFALVEGKDELVVPMTFTDAKGNVFTKRFVLKRESYAVGVDYQVKNVSAQPLEIQFYGQLKQTIAAPEGSSTPGMMASAFHGAAYSSAEQRYEKVNFSDIGETKLDVATQAGWAGMLQHYFVTAWTGKADAQNHIYGKAVSVNADVKDSGEAIIGIKLPLTTIAANSEAVVGTSLWIGPKLQDQMAAVAQHLDLTVDYGYLWFIAQPLFQLLQFLHGLVGNWGVAIILITMIVRGVMYPLSKAQYTSMAKMRLLQPKLTALRERLGDDRQKMSQAMMELYKEEKVNPLGGCFPLLIQMPIFIALYWTLMESVELRHAPFALWLTDLSVKDPYYVLPLLMGATMWYIQKMSPTTVTDPMQQKVMQFMPIVFTFMFLWFPSGLTLYWVVSNIVTIIQQTLIFRQLEKKGLHSRKK.

The helical transmembrane segment at 6–26 threads the bilayer; it reads NLLLIGLLLVSFMLWQSWMVD. The tract at residues 35–55 is disordered; sequence ATAESSVPASSGGDVPNQNDA. The next 4 helical transmembrane spans lie at 349–369, 424–444, 462–482, and 503–523; these read QFLHGLVGNWGVAIILITMIV, LGGCFPLLIQMPIFIALYWTL, LSVKDPYYVLPLLMGATMWYI, and PIVFTFMFLWFPSGLTLYWVV.

This sequence belongs to the OXA1/ALB3/YidC family. Type 1 subfamily. In terms of assembly, interacts with the Sec translocase complex via SecD. Specifically interacts with transmembrane segments of nascent integral membrane proteins during membrane integration.

Its subcellular location is the cell inner membrane. Required for the insertion and/or proper folding and/or complex formation of integral membrane proteins into the membrane. Involved in integration of membrane proteins that insert both dependently and independently of the Sec translocase complex, as well as at least some lipoproteins. Aids folding of multispanning membrane proteins. In Tolumonas auensis (strain DSM 9187 / NBRC 110442 / TA 4), this protein is Membrane protein insertase YidC.